A 505-amino-acid chain; its full sequence is Probable glycine dehydrogenase (decarboxylating) subunit 2 (505 aa).

N6-(pyridoxal phosphate)lysine is present on Lys274.

The protein belongs to the GcvP family. C-terminal subunit subfamily. The glycine cleavage system is composed of four proteins: P, T, L and H. In this organism, the P 'protein' is a heterodimer of two subunits. It depends on pyridoxal 5'-phosphate as a cofactor.

It catalyses the reaction N(6)-[(R)-lipoyl]-L-lysyl-[glycine-cleavage complex H protein] + glycine + H(+) = N(6)-[(R)-S(8)-aminomethyldihydrolipoyl]-L-lysyl-[glycine-cleavage complex H protein] + CO2. The glycine cleavage system catalyzes the degradation of glycine. The P protein binds the alpha-amino group of glycine through its pyridoxal phosphate cofactor; CO(2) is released and the remaining methylamine moiety is then transferred to the lipoamide cofactor of the H protein. This is Probable glycine dehydrogenase (decarboxylating) subunit 2 from Sulfurisphaera tokodaii (strain DSM 16993 / JCM 10545 / NBRC 100140 / 7) (Sulfolobus tokodaii).